We begin with the raw amino-acid sequence, 224 residues long: Transcription cofactor HES-6 (224 aa).

Residues 1–31 (MAPSQAPSRDRAGQEDEDRWEARGDRKARKP) form a disordered region. Residues 8–25 (SRDRAGQEDEDRWEARGD) show a composition bias toward basic and acidic residues. The region spanning 25-77 (DRKARKPLVEKKRRARINESLQELRLLLAGTEVQAKLENAEVLELTVRRVQGA) is the bHLH domain. Residues 96 to 129 (FAAGYIQCMHEVHTFVSTCQAIDATVSAELLNHL) form the Orange domain. The segment at 146–209 (GDSLAGLPGG…GPDLVSTSLG (64 aa)) is disordered. Residues 158–171 (RSSWPPGGSPESPL) show a composition bias toward low complexity. Residues 181–190 (LCSDLEEIPE) are compositionally biased toward acidic residues. Positions 221–224 (WRPW) match the WRPW motif motif.

As to quaternary structure, transcription repression requires formation of a complex with a corepressor protein of the Groucho/TLE family. Interacts with HES1. As to expression, expressed in both undifferentiated and differentiated cells. High levels of expression are observed in several embryonic tissues including the nervous system, muscle and thymus. In the nervous system, initially expressed in the closing neural tube, then in the spinal cord, cranial and dorsal root ganglia, and brain neuroepithelium. Also expressed in epithelial cells of the embryonic respiratory, urinary and digestive systems. In the limb buds, expressed in skeletal muscle and presumptive tendons.

The protein resides in the nucleus. Functionally, does not bind DNA itself but suppresses both HES1-mediated N box-dependent transcriptional repression and binding of HES1 to E box sequences. Also suppresses HES1-mediated inhibition of the heterodimer formed by ASCL1/MASH1 and TCF3/E47, allowing ASCL1 and TCF3 to up-regulate transcription in its presence. Promotes cell differentiation. The sequence is that of Transcription cofactor HES-6 from Mus musculus (Mouse).